A 718-amino-acid polypeptide reads, in one-letter code: Putative aminodeoxychorismate synthase (718 aa).

The region spanning 9–203 (QILLIDCYDS…LSLADTPNIQ (195 aa)) is the Glutamine amidotransferase type-1 domain. Catalysis depends on C88, which acts as the Nucleophile. Catalysis depends on residues H177 and E179. Residues 266-718 (FLDSAKKPGR…NLKNKKRSCK (453 aa)) form a PABB component region.

This sequence in the C-terminal section; belongs to the anthranilate synthase component I family.

The protein localises to the cytoplasm. Its subcellular location is the nucleus. It carries out the reaction chorismate + L-glutamine = 4-amino-4-deoxychorismate + L-glutamate. Its pathway is cofactor biosynthesis; tetrahydrofolate biosynthesis; 4-aminobenzoate from chorismate: step 1/2. In terms of biological role, catalyzes the biosynthesis of 4-amino-4-deoxychorismate (ADC) from chorismate and glutamine. Required for the synthesis of 4-aminobenzoate (PABA), an important component in tetrahydrofolate biosynthesis. The sequence is that of Putative aminodeoxychorismate synthase from Schizosaccharomyces pombe (strain 972 / ATCC 24843) (Fission yeast).